A 356-amino-acid chain; its full sequence is Heparan sulfate 2-O-sulfotransferase 1 (356 aa).

Over 1–11 (MGLLRIMLPPK) the chain is Cytoplasmic. A helical; Signal-anchor for type II membrane protein membrane pass occupies residues 12–28 (LQLLAVLVFGVAVLFLE). Residues 24-51 (VLFLENQIQKLEESRGKLERAIARHEVR) adopt a coiled-coil conformation. Over 29–356 (NQIQKLEESR…FYEKIYPKSN (328 aa)) the chain is Lumenal. Residues K83, T84, A85, S86, T87, and S88 each coordinate adenosine 3',5'-bisphosphate. 2 N-linked (GlcNAc...) asparagine glycosylation sites follow: N108 and N127. Active-site residues include H140 and H142. Residues R164 and S172 each coordinate adenosine 3',5'-bisphosphate. Cystine bridges form between C201-C209 and C222-C228. Adenosine 3',5'-bisphosphate-binding residues include Y279, S285, T290, and K293.

This sequence belongs to the sulfotransferase 3 family. Homotrimer. As to expression, expressed in heart, limb, head and trunk. At stages 20 and 24, it is expressed in the most regions of the first and second pharyngeal arche. In both wing and leg buds, it is detected at the overlying ectoderm and mesenchyme throughout stages 21, 23 and 24.

The protein resides in the golgi apparatus membrane. Functionally, catalyzes the transfer of a sulfo group from 3'-phospho-5'-adenylyl sulfate (PAPS) to the 2-OH position of iduronic acid (IdoA) or glucuronic acid (GlcA) within the heparan sulfate (HS) chain and participates in HS biosynthesis. The polypeptide is Heparan sulfate 2-O-sulfotransferase 1 (Gallus gallus (Chicken)).